The following is a 291-amino-acid chain: 5'-3' exonuclease (291 aa).

Positions 176 to 269 constitute a 5'-3' exonuclease domain; that stretch reads TPKQVIEYKG…VHAALKPIDK (94 aa).

Its function is as follows. 5'-3' exonuclease acting preferentially on double-stranded DNA. In Mycoplasma pneumoniae (strain ATCC 29342 / M129 / Subtype 1) (Mycoplasmoides pneumoniae), this protein is 5'-3' exonuclease (polA).